A 144-amino-acid polypeptide reads, in one-letter code: 3-dehydroquinate dehydratase (144 aa).

The active-site Proton acceptor is Tyr22. The substrate site is built by Asn73, His79, and Asp86. The active-site Proton donor is the His99. Residues 100-101 (IS) and Arg110 contribute to the substrate site.

It belongs to the type-II 3-dehydroquinase family. As to quaternary structure, homododecamer.

The catalysed reaction is 3-dehydroquinate = 3-dehydroshikimate + H2O. Its pathway is metabolic intermediate biosynthesis; chorismate biosynthesis; chorismate from D-erythrose 4-phosphate and phosphoenolpyruvate: step 3/7. Functionally, catalyzes a trans-dehydration via an enolate intermediate. This is 3-dehydroquinate dehydratase from Clostridium acetobutylicum (strain ATCC 824 / DSM 792 / JCM 1419 / IAM 19013 / LMG 5710 / NBRC 13948 / NRRL B-527 / VKM B-1787 / 2291 / W).